Reading from the N-terminus, the 104-residue chain is N(4)-acetylcytidine amidohydrolase (104 aa).

In terms of domain architecture, ASCH spans 7 to 93 (MTFFSRFEAD…EVIQEIYPGI (87 aa)). K22 acts as the Proton acceptor in catalysis. T25 acts as the Nucleophile in catalysis. E75 functions as the Proton donor in the catalytic mechanism.

The protein belongs to the N(4)-acetylcytidine amidohydrolase family.

It catalyses the reaction N(4)-acetylcytidine + H2O = cytidine + acetate + H(+). It carries out the reaction N(4)-acetyl-2'-deoxycytidine + H2O = 2'-deoxycytidine + acetate + H(+). The catalysed reaction is N(4)-acetylcytosine + H2O = cytosine + acetate + H(+). Catalyzes the hydrolysis of N(4)-acetylcytidine (ac4C). The protein is N(4)-acetylcytidine amidohydrolase of Vibrio vulnificus (strain CMCP6).